We begin with the raw amino-acid sequence, 546 residues long: MTPGEVRRLYFIIRTFLSYGLDELIPKMRITLPLRLWRYSLFWMPNRHKDKLLGERLRLALQELGPVWIKFGQMLSTRRDLFPPHIADQLALLQDKVAPFDGKLAKQQIEAAMGGLPVEAWFDDFEIKPLASASIAQVHTARLKSNGKEVVIKVIRPDILPVIKADLKLIYRLARWVPRLLPDGRRLRPTEVVREYEKTLIDELNLLRESANAIQLRRNFEDSPMLYIPEVYPDYCSEGMMVMERIYGIPVSDVAALEKNGTNMKLLAERGVQVFFTQVFRDSFFHADMHPGNIFVSYEHPENPKYIGIDCGIVGSLNKEDKRYLAENFIAFFNRDYRKVAELHVDSGWVPPDTNVEEFEFAIRTVCEPIFEKPLAEISFGHVLLNLFNTARRFNMEVQPQLVLLQKTLLYVEGVGRQLYPQLDLWKTAKPFLESWIKDQVGIPALVRAFKEKAPFWVEKMPELPELVYDSLRQGKYLQHSVDKIARELQSNHVRQGQSRYFLGIGATLVLSGTFLLVSRPEWGLMPGWLMAGGLIAWFVGWRKTR.

Residues 124–502 form the Protein kinase domain; that stretch reads DFEIKPLASA…HVRQGQSRYF (379 aa). ATP-binding positions include 130 to 138 and Lys153; that span reads LASASIAQV. Catalysis depends on Asp288, which acts as the Proton acceptor. 2 helical membrane-spanning segments follow: residues 501 to 521 and 522 to 542; these read YFLGIGATLVLSGTFLLVSRP and EWGLMPGWLMAGGLIAWFVGW.

The protein belongs to the ABC1 family. UbiB subfamily.

It is found in the cell inner membrane. It functions in the pathway cofactor biosynthesis; ubiquinone biosynthesis [regulation]. Its function is as follows. Is probably a protein kinase regulator of UbiI activity which is involved in aerobic coenzyme Q (ubiquinone) biosynthesis. This chain is Probable protein kinase UbiB, found in Shigella boydii serotype 18 (strain CDC 3083-94 / BS512).